We begin with the raw amino-acid sequence, 780 residues long: Semaphorin-3G (780 aa).

The N-terminal stretch at 1–22 (MDPSAWAICCLLGSLLFHVGIP) is a signal peptide. Positions 32–519 (RLRLSYRDLL…SPLGVARLQL (488 aa)) constitute a Sema domain. The N-linked (GlcNAc...) asparagine glycan is linked to N44. C105 and C116 form a disulfide bridge. A glycan (N-linked (GlcNAc...) asparagine) is linked at N127. Disulfide bonds link C134/C143, C270/C382, C294/C342, C522/C540, and C603/C655. The 103-residue stretch at 569 to 671 (PAVQCLGQGQ…FSQTVVRFAL (103 aa)) folds into the Ig-like C2-type domain. N-linked (GlcNAc...) asparagine glycosylation is present at N652.

This sequence belongs to the semaphorin family. In terms of tissue distribution, highly expressed in lung and kidney. Weakly expressed in brain.

It localises to the secreted. Functionally, has chemorepulsive activities for sympathetic axons. Ligand of NRP2. This is Semaphorin-3G (Sema3g) from Mus musculus (Mouse).